The primary structure comprises 99 residues: Integration host factor subunit alpha (99 aa).

The segment at 49–73 (FGNFDLRDKNQRPGRNPKTGEDIPI) is disordered.

The protein belongs to the bacterial histone-like protein family. In terms of assembly, heterodimer of an alpha and a beta chain.

Its function is as follows. This protein is one of the two subunits of integration host factor, a specific DNA-binding protein that functions in genetic recombination as well as in transcriptional and translational control. The sequence is that of Integration host factor subunit alpha from Shigella boydii serotype 18 (strain CDC 3083-94 / BS512).